The chain runs to 503 residues: Arabinose import ATP-binding protein AraG 1 (503 aa).

ABC transporter domains are found at residues 5–240 (LRFD…MVGR) and 253–497 (LGDV…LPQG). 37–44 (GENGAGKS) is a binding site for ATP.

The protein belongs to the ABC transporter superfamily. Arabinose importer (TC 3.A.1.2.2) family. The complex is composed of two ATP-binding proteins (AraG), two transmembrane proteins (AraH) and a solute-binding protein (AraF).

The protein resides in the cell inner membrane. It catalyses the reaction L-arabinose(out) + ATP + H2O = L-arabinose(in) + ADP + phosphate + H(+). Its function is as follows. Part of the ABC transporter complex AraFGH involved in arabinose import. Responsible for energy coupling to the transport system. The sequence is that of Arabinose import ATP-binding protein AraG 1 from Burkholderia thailandensis (strain ATCC 700388 / DSM 13276 / CCUG 48851 / CIP 106301 / E264).